Consider the following 31-residue polypeptide: ALWKDVLKKIGTVALHAGKAALGAVADTISE.

E31 carries the glutamic acid 1-amide modification.

As to expression, expressed by the skin glands.

Its subcellular location is the secreted. Its function is as follows. Has antimicrobial activity. This chain is Dermaseptin-7.2TR, found in Phyllomedusa trinitatis (Trinidad leaf frog).